The following is a 411-amino-acid chain: L-cysteine:1D-myo-inositol 2-amino-2-deoxy-alpha-D-glucopyranoside ligase (411 aa).

Cys-43 lines the Zn(2+) pocket. L-cysteinyl-5'-AMP-binding positions include 43-46, Thr-58, and 81-83; these read CGIT and NVT. Positions 45-55 match the 'HIGH' region motif; the sequence is ITPYDATHLGH. The 'ERGGDP' region motif lies at 186–191; that stretch reads QRGGDP. Residue Trp-226 participates in L-cysteinyl-5'-AMP binding. Cys-230 is a Zn(2+) binding site. Residue 248–250 coordinates L-cysteinyl-5'-AMP; it reads GSD. Residue His-255 participates in Zn(2+) binding. Ile-282 lines the L-cysteinyl-5'-AMP pocket. The short motif at 288 to 292 is the 'KMSKS' region element; it reads KMSKS.

This sequence belongs to the class-I aminoacyl-tRNA synthetase family. MshC subfamily. In terms of assembly, monomer. The cofactor is Zn(2+).

The catalysed reaction is 1D-myo-inositol 2-amino-2-deoxy-alpha-D-glucopyranoside + L-cysteine + ATP = 1D-myo-inositol 2-(L-cysteinylamino)-2-deoxy-alpha-D-glucopyranoside + AMP + diphosphate + H(+). Functionally, catalyzes the ATP-dependent condensation of GlcN-Ins and L-cysteine to form L-Cys-GlcN-Ins. The chain is L-cysteine:1D-myo-inositol 2-amino-2-deoxy-alpha-D-glucopyranoside ligase from Mycobacterium ulcerans (strain Agy99).